The primary structure comprises 206 residues: Putative archaetidylserine decarboxylase proenzyme (206 aa).

S172 acts as the Schiff-base intermediate with substrate; via pyruvic acid in catalysis. S172 carries the pyruvic acid (Ser); by autocatalysis modification.

Belongs to the phosphatidylserine decarboxylase family. PSD-A subfamily. Heterodimer of a large membrane-associated beta subunit and a small pyruvoyl-containing alpha subunit. Requires pyruvate as cofactor. Is synthesized initially as an inactive proenzyme. Formation of the active enzyme involves a self-maturation process in which the active site pyruvoyl group is generated from an internal serine residue via an autocatalytic post-translational modification. Two non-identical subunits are generated from the proenzyme in this reaction, and the pyruvate is formed at the N-terminus of the alpha chain, which is derived from the carboxyl end of the proenzyme. The post-translation cleavage follows an unusual pathway, termed non-hydrolytic serinolysis, in which the side chain hydroxyl group of the serine supplies its oxygen atom to form the C-terminus of the beta chain, while the remainder of the serine residue undergoes an oxidative deamination to produce ammonia and the pyruvoyl prosthetic group on the alpha chain.

Its subcellular location is the cell membrane. It carries out the reaction archaetidylserine + H(+) = archaetidylethanolamine + CO2. Functionally, catalyzes the formation of archaetidylethanolamine (PtdEtn) from archaetidylserine (PtdSer). In Methanocaldococcus jannaschii (strain ATCC 43067 / DSM 2661 / JAL-1 / JCM 10045 / NBRC 100440) (Methanococcus jannaschii), this protein is Putative archaetidylserine decarboxylase proenzyme.